A 449-amino-acid polypeptide reads, in one-letter code: UDP-N-acetylmuramate--L-alanine ligase (449 aa).

Position 118-124 (118-124 (GTHGKTT)) interacts with ATP.

The protein belongs to the MurCDEF family.

Its subcellular location is the cytoplasm. It carries out the reaction UDP-N-acetyl-alpha-D-muramate + L-alanine + ATP = UDP-N-acetyl-alpha-D-muramoyl-L-alanine + ADP + phosphate + H(+). It functions in the pathway cell wall biogenesis; peptidoglycan biosynthesis. Its function is as follows. Cell wall formation. The polypeptide is UDP-N-acetylmuramate--L-alanine ligase (Flavobacterium johnsoniae (strain ATCC 17061 / DSM 2064 / JCM 8514 / BCRC 14874 / CCUG 350202 / NBRC 14942 / NCIMB 11054 / UW101) (Cytophaga johnsonae)).